Here is a 1427-residue protein sequence, read N- to C-terminus: ATP-binding cassette transporter abc1 (1427 aa).

Residues L26–F46 traverse the membrane as a helical segment. A glycan (N-linked (GlcNAc...) asparagine) is linked at N49. The next 9 membrane-spanning stretches (helical) occupy residues C63–L83, A87–S107, L115–I135, L155–F175, C197–W217, I262–A282, G298–V318, V345–N367, and M397–L417. The region spanning I262–Q549 is the ABC transmembrane type-1 1 domain. The N-linked (GlcNAc...) asparagine glycan is linked to N437. 2 helical membrane-spanning segments follow: residues I489–I509 and I513–L533. 3 N-linked (GlcNAc...) asparagine glycosylation sites follow: N567, N581, and N601. Positions F579 to K807 constitute an ABC transporter 1 domain. The chain crosses the membrane as a helical span at residues F609–G629. G614–S621 is an ATP binding site. 2 N-linked (GlcNAc...) asparagine glycosylation sites follow: N658 and N703. A helical transmembrane segment spans residues I760–L780. 2 N-linked (GlcNAc...) asparagine glycosylation sites follow: N782 and N842. One can recognise an ABC transmembrane type-1 2 domain in the interval I862–T1142. 3 consecutive transmembrane segments (helical) span residues I866–W886, L896–M916, and L973–L993. A glycan (N-linked (GlcNAc...) asparagine) is linked at N994. 3 helical membrane passes run V995–L1015, L1086–L1106, and G1114–V1134. N-linked (GlcNAc...) asparagine glycans are attached at residues N1161 and N1184. Positions V1180 to E1422 constitute an ABC transporter 2 domain. An ATP-binding site is contributed by G1214–S1221. A helical transmembrane segment spans residues M1223 to I1243. N1324 carries N-linked (GlcNAc...) asparagine glycosylation.

It belongs to the ABC transporter superfamily. ABCC family. Conjugate transporter (TC 3.A.1.208) subfamily.

The protein localises to the membrane. This Schizosaccharomyces pombe (strain 972 / ATCC 24843) (Fission yeast) protein is ATP-binding cassette transporter abc1 (abc1).